The following is a 116-amino-acid chain: Large ribosomal subunit protein uL18 (116 aa).

This sequence belongs to the universal ribosomal protein uL18 family. In terms of assembly, part of the 50S ribosomal subunit; part of the 5S rRNA/L5/L18/L25 subcomplex. Contacts the 5S and 23S rRNAs.

Its function is as follows. This is one of the proteins that bind and probably mediate the attachment of the 5S RNA into the large ribosomal subunit, where it forms part of the central protuberance. The sequence is that of Large ribosomal subunit protein uL18 from Shewanella baltica (strain OS223).